Reading from the N-terminus, the 143-residue chain is Large ribosomal subunit protein uL11 (143 aa).

Belongs to the universal ribosomal protein uL11 family. Part of the ribosomal stalk of the 50S ribosomal subunit. Interacts with L10 and the large rRNA to form the base of the stalk. L10 forms an elongated spine to which L12 dimers bind in a sequential fashion forming a multimeric L10(L12)X complex. Post-translationally, one or more lysine residues are methylated.

Forms part of the ribosomal stalk which helps the ribosome interact with GTP-bound translation factors. The chain is Large ribosomal subunit protein uL11 from Bifidobacterium adolescentis (strain ATCC 15703 / DSM 20083 / NCTC 11814 / E194a).